Consider the following 447-residue polypeptide: Alpha-1,3-mannosyl-glycoprotein 2-beta-N-acetylglucosaminyltransferase (447 aa).

Residues 1-6 lie on the Cytoplasmic side of the membrane; it reads MLKKQS. The chain crosses the membrane as a helical; Signal-anchor for type II membrane protein span at residues 7–29; the sequence is AGLVLWGAILFVAWNALLLLFFW. The Lumenal portion of the chain corresponds to 30–447; sequence TRPVPSRLPS…TWDGYDPSWT (418 aa). Cys115 and Cys145 form a disulfide bridge. The substrate site is built by Arg117, Asp144, His190, and Asp212. Asp213 contacts Mn(2+). Cysteines 239 and 305 form a disulfide. The active-site Proton acceptor is Asp291. Residue Ser322 coordinates substrate.

The protein belongs to the glycosyltransferase 13 family. As to quaternary structure, interacts with MGAT4D. Interacts with BRI3. It depends on Mn(2+) as a cofactor.

The protein resides in the golgi apparatus membrane. It is found in the cytoplasm. It localises to the perinuclear region. It catalyses the reaction N(4)-(alpha-D-Man-(1-&gt;3)-[alpha-D-Man-(1-&gt;3)-[alpha-D-Man-(1-&gt;6)]-alpha-D-Man-(1-&gt;6)]-beta-D-Man-(1-&gt;4)-beta-D-GlcNAc-(1-&gt;4)-beta-D-GlcNAc)-L-asparaginyl-[protein] (N-glucan mannose isomer 5A1,2) + UDP-N-acetyl-alpha-D-glucosamine = N(4)-{beta-D-GlcNAc-(1-&gt;2)-alpha-D-Man-(1-&gt;3)-[alpha-D-Man-(1-&gt;3)-[alpha-D-Man-(1-&gt;6)]-alpha-D-Man-(1-&gt;6)]-beta-D-Man-(1-&gt;4)-beta-D-GlcNAc-(1-&gt;4)-beta-D-GlcNAc}-L-asparaginyl-[protein] + UDP + H(+). Its pathway is protein modification; protein glycosylation. Its function is as follows. Initiates complex N-linked carbohydrate formation. Essential for the conversion of high-mannose to hybrid and complex N-glycans. In Oryctolagus cuniculus (Rabbit), this protein is Alpha-1,3-mannosyl-glycoprotein 2-beta-N-acetylglucosaminyltransferase (MGAT1).